Here is a 177-residue protein sequence, read N- to C-terminus: Small ribosomal subunit protein uS4 (177 aa).

The S4 RNA-binding domain occupies 104 to 168 (RRLQTLVFRK…SPMASESHPE (65 aa)). The tract at residues 157 to 177 (PNSPMASESHPERTDSVKDAE) is disordered. The span at 165–177 (SHPERTDSVKDAE) shows a compositional bias: basic and acidic residues.

This sequence belongs to the universal ribosomal protein uS4 family. As to quaternary structure, part of the 30S ribosomal subunit. Contacts protein S5. The interaction surface between S4 and S5 is involved in control of translational fidelity.

One of the primary rRNA binding proteins, it binds directly to 16S rRNA where it nucleates assembly of the body of the 30S subunit. Its function is as follows. With S5 and S12 plays an important role in translational accuracy. This is Small ribosomal subunit protein uS4 from Methanococcus aeolicus (strain ATCC BAA-1280 / DSM 17508 / OCM 812 / Nankai-3).